The chain runs to 706 residues: Fatty acid oxidation complex subunit alpha (706 aa).

Positions M1–P188 are enoyl-CoA hydratase. A 3-hydroxyacyl-CoA dehydrogenase region spans residues K308 to E706.

In the N-terminal section; belongs to the enoyl-CoA hydratase/isomerase family. This sequence in the central section; belongs to the 3-hydroxyacyl-CoA dehydrogenase family. As to quaternary structure, heterotetramer of two alpha chains (FadJ) and two beta chains (FadI).

It localises to the cytoplasm. It catalyses the reaction a (3S)-3-hydroxyacyl-CoA = a (2E)-enoyl-CoA + H2O. The catalysed reaction is a 4-saturated-(3S)-3-hydroxyacyl-CoA = a (3E)-enoyl-CoA + H2O. The enzyme catalyses a (3S)-3-hydroxyacyl-CoA + NAD(+) = a 3-oxoacyl-CoA + NADH + H(+). It carries out the reaction (3S)-3-hydroxybutanoyl-CoA = (3R)-3-hydroxybutanoyl-CoA. It functions in the pathway lipid metabolism; fatty acid beta-oxidation. In terms of biological role, catalyzes the formation of a hydroxyacyl-CoA by addition of water on enoyl-CoA. Also exhibits 3-hydroxyacyl-CoA epimerase and 3-hydroxyacyl-CoA dehydrogenase activities. This chain is Fatty acid oxidation complex subunit alpha, found in Shewanella loihica (strain ATCC BAA-1088 / PV-4).